We begin with the raw amino-acid sequence, 600 residues long: Torsin-1A-interacting protein 1 (600 aa).

Residues 1 to 14 (MAGEGQRAEPEREG) show a composition bias toward basic and acidic residues. 2 disordered regions span residues 1–261 (MAGE…YKES) and 310–346 (MRSI…QPKS). Over 1-354 (MAGEGQRAEP…KSVSSVKTKR (354 aa)) the chain is Nuclear. Ser-61 is subject to Phosphoserine. Basic and acidic residues-rich tracts occupy residues 71–81 (FEPRAAKEKAR), 91–102 (FRPDSAKEEVRE), and 116–125 (RLHEAEEMQT). Residues Ser-137, Ser-145, Ser-156, Ser-158, Ser-159, and Ser-189 each carry the phosphoserine modification. Positions 192 to 203 (PLISLRRPPLRS) are enriched in low complexity. The segment covering 219 to 232 (EEGETEENDQDSFD) has biased composition (acidic residues). Position 223 is a phosphothreonine (Thr-223). A phosphoserine mark is found at Ser-230, Ser-233, and Ser-244. Positions 247–261 (SGDQTTRSSSQYKES) are enriched in polar residues. Ser-322 carries the post-translational modification Phosphoserine. A Glycyl lysine isopeptide (Lys-Gly) (interchain with G-Cter in SUMO2) cross-link involves residue Lys-325. Polar residues predominate over residues 325–346 (KSELGNQSPSTSNQQMTGQPKS). Ser-332 carries the phosphoserine modification. The chain crosses the membrane as a helical span at residues 355–371 (YWPFAVIAALLIGGFLY). Over 372-600 (TRPPEAETTA…ENDLKKGICL (229 aa)) the chain is Perinuclear space. The segment at 373-600 (RPPEAETTAV…ENDLKKGICL (228 aa)) is interaction with TOR1A. The stretch at 376–452 (EAETTAVQEF…SEQIADAYSS (77 aa)) forms a coiled coil. N-linked (GlcNAc...) asparagine glycosylation occurs at Asn-416.

Belongs to the TOR1AIP family. Interacts with ATP1B4. Interacts with TOR1A (ATP-bound). Interacts with TOR1B, TOR2A and TOR3A. Interacts with VIM.

Its subcellular location is the nucleus inner membrane. Required for nuclear membrane integrity. Induces TOR1A and TOR1B ATPase activity and is required for their location on the nuclear membrane. Binds to A- and B-type lamins. Possible role in membrane attachment and assembly of the nuclear lamina. In Bos taurus (Bovine), this protein is Torsin-1A-interacting protein 1 (TOR1AIP1).